The sequence spans 93 residues: Putative protein adenylyltransferase MJ0435 (93 aa).

Residues 26–40 carry the GSX(10)DXD motif motif; that stretch reads GSYARNEQKETSDID. Mg(2+) is bound by residues D38, D40, and D70.

It belongs to the MntA antitoxin family. As to quaternary structure, probably forms a complex with cognate toxin MJ0434. It depends on Mg(2+) as a cofactor.

The catalysed reaction is L-tyrosyl-[protein] + ATP = O-(5'-adenylyl)-L-tyrosyl-[protein] + diphosphate. The enzyme catalyses O-(5'-adenylyl)-L-tyrosyl-[protein] + ATP = O-[5'-(adenylyl-(5'-&gt;3')-adenylyl)]-L-tyrosyl-[protein] + diphosphate. Functionally, probable antitoxin component of a putative type VII toxin-antitoxin (TA) system. Neutralizes cognate toxic MJ0434 by di-AMPylation. The protein is Putative protein adenylyltransferase MJ0435 of Methanocaldococcus jannaschii (strain ATCC 43067 / DSM 2661 / JAL-1 / JCM 10045 / NBRC 100440) (Methanococcus jannaschii).